Consider the following 148-residue polypeptide: Large ribosomal subunit protein uL16 (148 aa).

This sequence belongs to the universal ribosomal protein uL16 family. As to quaternary structure, part of the 50S ribosomal subunit.

Functionally, binds 23S rRNA and is also seen to make contacts with the A and possibly P site tRNAs. This Gloeobacter violaceus (strain ATCC 29082 / PCC 7421) protein is Large ribosomal subunit protein uL16.